Reading from the N-terminus, the 189-residue chain is Large ribosomal subunit protein bL12c (189 aa).

Disordered stretches follow at residues 1-30 (MAATTTMATLNLPSLTSHPNSSTFPKHPQP) and 165-189 (EGVSKDDAEDAKKQLEDAGAKVSIV). Residues 1–56 (MAATTTMATLNLPSLTSHPNSSTFPKHPQPLQFPFRTTTNPISLSSTRTTRLRPIA) constitute a chloroplast transit peptide. Residues 11 to 24 (NLPSLTSHPNSSTF) show a composition bias toward polar residues. The segment covering 165–183 (EGVSKDDAEDAKKQLEDAG) has biased composition (basic and acidic residues).

In terms of assembly, component of the chloroplast large ribosomal subunit (LSU). Mature 70S chloroplast ribosomes of higher plants consist of a small (30S) and a large (50S) subunit. The 30S small subunit contains 1 molecule of ribosomal RNA (16S rRNA) and 24 different proteins. The 50S large subunit contains 3 rRNA molecules (23S, 5S and 4.5S rRNA) and 33 different proteins.

The protein resides in the plastid. The protein localises to the chloroplast. Functionally, component of the chloroplast ribosome (chloro-ribosome), a dedicated translation machinery responsible for the synthesis of chloroplast genome-encoded proteins, including proteins of the transcription and translation machinery and components of the photosynthetic apparatus. This chain is Large ribosomal subunit protein bL12c (RPL12), found in Spinacia oleracea (Spinach).